The sequence spans 275 residues: Large ribosomal subunit protein uL2c (275 aa).

Residues 225–252 (MNPCDHPHGGGEGRSPIGRAKPVTPWGK) form a disordered region.

This sequence belongs to the universal ribosomal protein uL2 family. As to quaternary structure, part of the 50S ribosomal subunit.

The protein localises to the plastid. Its subcellular location is the chloroplast. In Guillardia theta (Cryptophyte), this protein is Large ribosomal subunit protein uL2c (rpl2).